The following is a 1587-amino-acid chain: DNA topoisomerase 2 (1587 aa).

Over residues 1-15 the composition is skewed to acidic residues; sequence MSDADPFDMSDDDDN. The segment at 1–47 is disordered; that stretch reads MSDADPFDMSDDDDNSVLSHTPPKKQKKAPTTKKGGSKPLADVENES. Basic residues predominate over residues 22–31; that stretch reads PPKKQKKAPT. ATP is bound by residues N126, N155, 183 to 185, and 196 to 203; these read SSN and GRNGFGAK. Interaction with DNA stretches follow at residues 381-383 and 381-386; these read KKK and KKKNKN. Residue 415–417 participates in ATP binding; sequence QTK. The disordered stretch occupies residues 461-485; it reads MLKKTDGGRRSRMNNPKLTDANKAG. Positions 492 to 606 constitute a Toprim domain; sequence CTLILTEGDS…SLLKIPEFLI (115 aa). Mg(2+)-binding residues include E498, D575, and D577. Positions 743-1190 constitute a Topo IIA-type catalytic domain; the sequence is IPSVVDGLKP…SKEDIWKRDL (448 aa). Residue Y833 is the O-(5'-phospho-DNA)-tyrosine intermediate of the active site. An interaction with DNA region spans residues 1016 to 1025; sequence KLSKTMTTTN. Residues 1204–1587 form a disordered region; the sequence is EARRQRKVAN…PRPRRPRRRS (384 aa). Low complexity predominate over residues 1271–1280; the sequence is LSFLGKSSAK. Residues 1308–1320 are compositionally biased toward basic and acidic residues; that stretch reads PKSEPKADPKPKD. The span at 1321-1334 shows a compositional bias: acidic residues; that stretch reads EDEDIVMEDSDIEE. Over residues 1348–1364 the composition is skewed to basic and acidic residues; the sequence is VKPESEDGQAKIAEAPK. Residues 1365 to 1375 are compositionally biased toward basic residues; it reads RGRAAAKPKPK. 2 stretches are compositionally biased toward acidic residues: residues 1379–1391 and 1419–1430; these read EDEE…DDFM and SDSDSDNGDDLL. 2 stretches are compositionally biased toward polar residues: residues 1441–1451 and 1466–1475; these read GSTNGASTSDS and GLKTTASKAS. Residues 1512-1521 are compositionally biased toward acidic residues; the sequence is DNEPEDDDDE. The segment covering 1524 to 1542 has biased composition (low complexity); it reads KPAAKGKAAAKGKSTAAAA. The segment covering 1558–1568 has biased composition (pro residues); the sequence is PKPPPRLPCPL. The span at 1571–1587 shows a compositional bias: basic residues; sequence RRTHRSNPRPRRPRRRS.

It belongs to the type II topoisomerase family. As to quaternary structure, homodimer. Mg(2+) is required as a cofactor. Mn(2+) serves as cofactor. The cofactor is Ca(2+).

The protein resides in the nucleus. The enzyme catalyses ATP-dependent breakage, passage and rejoining of double-stranded DNA.. Functionally, control of topological states of DNA by transient breakage and subsequent rejoining of DNA strands. Topoisomerase II makes double-strand breaks. The polypeptide is DNA topoisomerase 2 (TOP2) (Penicillium chrysogenum (Penicillium notatum)).